A 132-amino-acid polypeptide reads, in one-letter code: Large ribosomal subunit protein bL12 (132 aa).

Belongs to the bacterial ribosomal protein bL12 family. Homodimer. Part of the ribosomal stalk of the 50S ribosomal subunit. Forms a multimeric L10(L12)X complex, where L10 forms an elongated spine to which 2 to 4 L12 dimers bind in a sequential fashion. Binds GTP-bound translation factors.

Functionally, forms part of the ribosomal stalk which helps the ribosome interact with GTP-bound translation factors. Is thus essential for accurate translation. The sequence is that of Large ribosomal subunit protein bL12 from Ehrlichia canis (strain Jake).